A 239-amino-acid polypeptide reads, in one-letter code: MKVTLFVTCLVDMFETNVGKATVEVLERLGCEIEFPEAQVCCGQPAYNSGHVEAAKEAMKHMIETFEDAEYIVTPSGSCATMFHEYPHVFKDDPKWAKRAQKVADKTYEFTQFIVDVLKVTDVGASLPGIATIHKSCHMTRMLGVTEAPGILLSNVKGLTVRELPNVQNCCGFGGTFSVKMTPISEQMVDEKVDSAMETGADYLIGADCGCLLNIGGRIERLGKEIKVMHIAEVLNSRS.

Belongs to the LutA/YkgE family.

In terms of biological role, is involved in L-lactate degradation and allows cells to grow with lactate as the sole carbon source. This chain is Lactate utilization protein A 1, found in Bacillus anthracis (strain A0248).